Consider the following 142-residue polypeptide: Hemoglobin subunit alpha-2 (142 aa).

A Globin domain is found at 2 to 142 (VLSPADKTNV…VSTVLTSKYR (141 aa)). His59 is a binding site for O2. His88 provides a ligand contact to heme b.

This sequence belongs to the globin family. As to quaternary structure, heterotetramer of two alpha chains and two beta chains. As to expression, red blood cells.

In terms of biological role, involved in oxygen transport from the lung to the various peripheral tissues. Functionally, hemopressin acts as an antagonist peptide of the cannabinoid receptor CNR1. Hemopressin-binding efficiently blocks cannabinoid receptor CNR1 and subsequent signaling. The sequence is that of Hemoglobin subunit alpha-2 (HBA2) from Hylobates lar (Lar gibbon).